We begin with the raw amino-acid sequence, 565 residues long: NAD-dependent malic enzyme (565 aa).

Residue Tyr104 is the Proton donor of the active site. Residue Arg157 participates in NAD(+) binding. Lys175 serves as the catalytic Proton acceptor. 3 residues coordinate a divalent metal cation: Glu246, Asp247, and Asp270. Residues Asp270 and Asn418 each coordinate NAD(+).

It belongs to the malic enzymes family. As to quaternary structure, homotetramer. Mg(2+) serves as cofactor. It depends on Mn(2+) as a cofactor.

The enzyme catalyses (S)-malate + NAD(+) = pyruvate + CO2 + NADH. It carries out the reaction oxaloacetate + H(+) = pyruvate + CO2. The chain is NAD-dependent malic enzyme from Salmonella heidelberg (strain SL476).